Here is a 299-residue protein sequence, read N- to C-terminus: MTTVNLAAYRFVSLDSIEQWRPLVAARCNTLGLRGTILLAPEGINLFIAGPREATDAFVDYIRHDPLFEGKFADLPFKESLSDSQPFRRMLVRLKREIITMKKPAIKPELGRAPAVDARTLKAWLDQGHDDAGRPVVMLDTRNAFEVDVGTFDRALDYRIDKFSEFPAVIEANRADLEGKTIVSFCTGGIRCEKAAIHMKDVGIENVYQLEGGILKYFEEVGGAHYHGDCFVFDYRTALNPQLAPTADVTCFACRAVVPADAQQSPLYVPGKCCPACHPGDSGTPGRRAEPGAEPARAV.

The 95-residue stretch at 132–226 (AGRPVVMLDT…YFEEVGGAHY (95 aa)) folds into the Rhodanese domain. Cys-186 serves as the catalytic Cysteine persulfide intermediate.

It belongs to the TrhO family.

It catalyses the reaction uridine(34) in tRNA + AH2 + O2 = 5-hydroxyuridine(34) in tRNA + A + H2O. Catalyzes oxygen-dependent 5-hydroxyuridine (ho5U) modification at position 34 in tRNAs. In Burkholderia pseudomallei (strain 1106a), this protein is tRNA uridine(34) hydroxylase.